The primary structure comprises 461 residues: MLKIYNSLTRQKEEFKPITEGKVGMYVCGVTIYDLCHIGHGRTFVSFDVISRYLRFLGYDLTFVRNITDIDDKIIKRAAENGETCDALTERLIADMHADFDALNMKRPDVEPRATEYIKEIIALVERLIERGFAYVASNGDVMFEVKKYDEYGCLSRQDLEQLQAGSRVTLEEASVKRSGMDFVLWKMSKPGEPTWESPWGPGRPGWHIECSAMNSSILGDHFDIHGGGSDLMFPHHENEIAQSCCAHDTPYVNTWMHSGMVMVDREKMSKSLGNFFTIRDVLAHYDSETVRYFLMSGHYRSQLNYSEENLNQARASLERLYTSLRGLDLSVTPAGGEEFVGRFSTAMNDDFNTPEAYSVLFEMAREVNRLKTENIDTASKLGALMRELADVLGLLSQEPEAFLQGGSSNDDVAEIEALIKARNDARAAKDWAAADAARDAIAALNIVLEDGPEGTTWRRK.

Residue Cys28 coordinates Zn(2+). A 'HIGH' region motif is present at residues 30–40 (VTIYDLCHIGH). Residues Cys211, His236, and Glu240 each contribute to the Zn(2+) site. The 'KMSKS' region motif lies at 268–272 (KMSKS). Lys271 serves as a coordination point for ATP.

This sequence belongs to the class-I aminoacyl-tRNA synthetase family. Monomer. It depends on Zn(2+) as a cofactor.

The protein resides in the cytoplasm. It catalyses the reaction tRNA(Cys) + L-cysteine + ATP = L-cysteinyl-tRNA(Cys) + AMP + diphosphate. The polypeptide is Cysteine--tRNA ligase (Aliivibrio fischeri (strain ATCC 700601 / ES114) (Vibrio fischeri)).